Here is a 339-residue protein sequence, read N- to C-terminus: Dihydroorotate dehydrogenase (quinone) (339 aa).

FMN contacts are provided by residues 61–65 (AGLDK) and T85. Position 65 (K65) interacts with substrate. 110 to 114 (NRMGF) lines the substrate pocket. FMN contacts are provided by N138 and N171. A substrate-binding site is contributed by N171. The Nucleophile role is filled by S174. N176 is a binding site for substrate. Residues K216 and T244 each contribute to the FMN site. 245 to 246 (NT) is a substrate binding site. FMN is bound by residues G267, G296, and 317-318 (YS).

The protein belongs to the dihydroorotate dehydrogenase family. Type 2 subfamily. Monomer. It depends on FMN as a cofactor.

The protein localises to the cell membrane. The enzyme catalyses (S)-dihydroorotate + a quinone = orotate + a quinol. It functions in the pathway pyrimidine metabolism; UMP biosynthesis via de novo pathway; orotate from (S)-dihydroorotate (quinone route): step 1/1. Functionally, catalyzes the conversion of dihydroorotate to orotate with quinone as electron acceptor. The sequence is that of Dihydroorotate dehydrogenase (quinone) from Saccharophagus degradans (strain 2-40 / ATCC 43961 / DSM 17024).